A 153-amino-acid chain; its full sequence is 17.6 kDa class I heat shock protein (153 aa).

Positions 38–153 constitute a sHSP domain; sequence ETAAIVNARI…PMVKAIDISG (116 aa).

This sequence belongs to the small heat shock protein (HSP20) family. In terms of assembly, forms oligomeric structures.

It is found in the cytoplasm. The polypeptide is 17.6 kDa class I heat shock protein (HSP17.6) (Helianthus annuus (Common sunflower)).